The sequence spans 848 residues: ATP-dependent Clp protease ATP-binding subunit ClpC1 (848 aa).

The 143-residue stretch at 2–144 (FERFTDRARR…RQQVIQLLSG (143 aa)) folds into the Clp R domain. Repeat stretches follow at residues 5–70 (FTDR…IGQG) and 80–144 (FTPR…LLSG). The UVR domain maps to 425–460 (DEKIADARREKESAIDAQDFEKAAALRDKEKQLVAQ). ATP contacts are provided by residues 553 to 560 (GPSGVGKT) and 617 to 626 (KPFSVVLFDE). The tract at residues 811 to 848 (GQGEDAKFTFSGGPKRAETAEPDLAGAGAAGAPTAGTE) is disordered. The segment covering 835–848 (AGAGAAGAPTAGTE) has biased composition (low complexity).

This sequence belongs to the ClpA/ClpB family. ClpC subfamily.

Functionally, ATP-dependent specificity component of the Clp protease. It directs the protease to specific substrates. Can perform chaperone functions in the absence of ClpP. Degrades anti-sigma-E factor RseA in the presence of ClpP2. The sequence is that of ATP-dependent Clp protease ATP-binding subunit ClpC1 (clpC1) from Mycolicibacterium smegmatis (strain ATCC 700084 / mc(2)155) (Mycobacterium smegmatis).